A 393-amino-acid polypeptide reads, in one-letter code: CAI-1 autoinducer synthase (393 aa).

Lys-240 bears the N6-(pyridoxal phosphate)lysine mark.

This sequence belongs to the class-II pyridoxal-phosphate-dependent aminotransferase family. Pyridoxal 5'-phosphate is required as a cofactor.

In terms of biological role, required for the synthesis of the quorum-sensing autoinducer CAI-1 ((S)-3-hydroxytridecan-4-one) which probably functions as an intragenus signal. The polypeptide is CAI-1 autoinducer synthase (cqsA) (Vibrio campbellii (strain ATCC BAA-1116)).